The primary structure comprises 161 residues: Nucleotide-binding protein Sama_2557 (161 aa).

Belongs to the YajQ family.

Its function is as follows. Nucleotide-binding protein. This Shewanella amazonensis (strain ATCC BAA-1098 / SB2B) protein is Nucleotide-binding protein Sama_2557.